Reading from the N-terminus, the 510-residue chain is 2,3-bisphosphoglycerate-independent phosphoglycerate mutase (510 aa).

The Mn(2+) site is built by aspartate 13 and serine 63. Serine 63 serves as the catalytic Phosphoserine intermediate. Substrate is bound by residues histidine 124, 154–155, arginine 186, arginine 192, 262–265, and lysine 334; these read RD and RADR. Residues aspartate 401, histidine 405, aspartate 442, histidine 443, and histidine 461 each contribute to the Mn(2+) site.

Belongs to the BPG-independent phosphoglycerate mutase family. In terms of assembly, monomer. Mn(2+) serves as cofactor.

The catalysed reaction is (2R)-2-phosphoglycerate = (2R)-3-phosphoglycerate. It participates in carbohydrate degradation; glycolysis; pyruvate from D-glyceraldehyde 3-phosphate: step 3/5. Functionally, catalyzes the interconversion of 2-phosphoglycerate and 3-phosphoglycerate. The chain is 2,3-bisphosphoglycerate-independent phosphoglycerate mutase from Vibrio parahaemolyticus serotype O3:K6 (strain RIMD 2210633).